We begin with the raw amino-acid sequence, 119 residues long: Large ribosomal subunit protein bL20 (119 aa).

This sequence belongs to the bacterial ribosomal protein bL20 family.

Functionally, binds directly to 23S ribosomal RNA and is necessary for the in vitro assembly process of the 50S ribosomal subunit. It is not involved in the protein synthesizing functions of that subunit. The protein is Large ribosomal subunit protein bL20 of Nitrosomonas europaea (strain ATCC 19718 / CIP 103999 / KCTC 2705 / NBRC 14298).